The primary structure comprises 1351 residues: Bromodomain-containing protein 4A (1351 aa).

7 disordered regions span residues 1–23 (MSSE…GIEG), 35–58 (PQPQ…QPKR), 168–244 (ETEL…RPPA), 285–368 (AAQP…DTKT), 478–638 (EPEE…PMSY), 700–799 (CLRK…LDSS), and 821–1334 (PDLP…PSID). Positions 58 to 164 (RQTNQLQYLL…KLFLQKISEM (107 aa)) constitute a Bromo 1 domain. Positions 208–219 (VKPPVTPVSKPS) are enriched in low complexity. Residues 220 to 235 (TPTPPTVTRAPTPPQT) are compositionally biased toward pro residues. The segment covering 327–343 (PRKENGRQIRPTKKTEV) has biased composition (basic and acidic residues). Residues 349-359 (PAPPVLHPQPA) are compositionally biased toward pro residues. The region spanning 366 to 475 (TKTSEQLRYC…DVFEMRFAKM (110 aa)) is the Bromo 2 domain. A compositionally biased stretch (pro residues) spans 482-504 (APAPVPSLAPGPPAPSIKGPPPT). The NPS region stretch occupies residues 504–522 (TSSDSSSDSTSDSESSSDS). The segment covering 505 to 517 (SSDSSSDSTSDSE) has biased composition (low complexity). A BID region region spans residues 543 to 598 (QLAALSQPQPNKPKKKEREKRKEKHKRKEEVEEPRKGRIREPPAKKPKKSVQGSGG). Basic residues predominate over residues 554 to 569 (KPKKKEREKRKEKHKR). Residues 570–586 (KEEVEEPRKGRIREPPA) are compositionally biased toward basic and acidic residues. Residues 607–621 (PPPAPRPARPAPPSA) are compositionally biased toward pro residues. The NET domain maps to 624-708 (ESSEEETQRC…SCLRKKRKSQ (85 aa)). Basic and acidic residues predominate over residues 629-638 (ETQRCRPMSY). Low complexity predominate over residues 725-738 (SSSESESSSESSTS). Residues 751–767 (QKKKGHSGRESRKHHHP) show a composition bias toward basic residues. Residues 788–799 (PSYPLPSSLDSS) are compositionally biased toward low complexity. The segment covering 872–890 (PAMPPSASPPPPAPQPPQQ) has biased composition (pro residues). Residues 892 to 902 (HVHHHHHHHAQ) show a composition bias toward basic residues. Over residues 927-953 (LQKSQQPPTQSPIHSLLTSVKVQSQTP) the composition is skewed to polar residues. Residues 968-983 (VYPPPPSTATTAPPPA) are compositionally biased toward pro residues. 2 stretches are compositionally biased toward low complexity: residues 994–1003 (PVVPQQLPAG) and 1011–1028 (QQQQ…SHQQ). Residues 1051–1350 (RQQKQETYPG…LMEIFEQNLF (300 aa)) form a C-terminal (CTD) region region. Over residues 1075–1089 (PPVPPYPGLTHPPSP) the composition is skewed to pro residues. Composition is skewed to basic and acidic residues over residues 1150–1161 (PRPDLKKMDGGR) and 1176–1197 (PEKE…DIKI). The span at 1214 to 1224 (PTSAGKSTSDS) shows a compositional bias: polar residues. Over residues 1226–1284 (ELFRRQAREKEERERALKLQAEQAERVRREQDRMSRTREDDEVQDQARKAHEEARRRQE) the composition is skewed to basic and acidic residues. Over residues 1301–1310 (SPAQSSQPMM) the composition is skewed to low complexity. The segment covering 1311–1323 (DQREMARKREQER) has biased composition (basic and acidic residues).

Belongs to the BET family.

The protein localises to the nucleus. The protein resides in the chromosome. Functionally, chromatin reader protein that recognizes and binds acetylated histones and plays a key role in transmission of epigenetic memory across cell divisions and transcription regulation. Remains associated with acetylated chromatin throughout the entire cell cycle and provides epigenetic memory for postmitotic G1 gene transcription by preserving acetylated chromatin status and maintaining high-order chromatin structure. During interphase, plays a key role in regulating the transcription of signal-inducible genes by associating with the P-TEFb complex and recruiting it to promoters. In Xenopus laevis (African clawed frog), this protein is Bromodomain-containing protein 4A (brd4-a).